A 381-amino-acid polypeptide reads, in one-letter code: Phthiodiolone/phenolphthiodiolone dimycocerosates ketoreductase (381 aa).

The protein belongs to the mer family. Phthiodiolone/phenolphthiodiolone dimycocerosates ketoreductase subfamily.

Its function is as follows. Catalyzes the reduction of the keto moiety of phthiodiolone dimycocerosates (DIM B) and glycosylated phenolphthiodiolone dimycocerosates to form the intermediate compounds phthiotriol and glycosylated phenolphthiotriol dimycocerosates during phthiocerol dimycocerosates (DIM A) and glycosylated phenolphthiocerol dimycocerosates (PGL) biosynthesis. This chain is Phthiodiolone/phenolphthiodiolone dimycocerosates ketoreductase, found in Mycobacterium bovis (strain ATCC BAA-935 / AF2122/97).